The sequence spans 96 residues: Nucleoid-associated protein CT_335 (96 aa).

The protein belongs to the YbaB/EbfC family. In terms of assembly, homodimer.

It is found in the cytoplasm. The protein resides in the nucleoid. Its function is as follows. Binds to DNA and alters its conformation. May be involved in regulation of gene expression, nucleoid organization and DNA protection. This is Nucleoid-associated protein CT_335 from Chlamydia trachomatis serovar D (strain ATCC VR-885 / DSM 19411 / UW-3/Cx).